We begin with the raw amino-acid sequence, 310 residues long: S-adenosylmethionine-dependent nucleotide dehydratase (310 aa).

The Radical SAM core domain occupies 3–221 (PAIPPTINLH…VERHRKVESS (219 aa)). 3 residues coordinate [4Fe-4S] cluster: cysteine 17, cysteine 21, and cysteine 24.

The protein belongs to the radical SAM superfamily. Viperin family. [4Fe-4S] cluster serves as cofactor.

It catalyses the reaction GTP + AH2 + S-adenosyl-L-methionine = 3'-deoxy-3',4'-didehydro-GTP + 5'-deoxyadenosine + L-methionine + A + H2O + H(+). Expression of pVip15 in E.coli (strain MG1655) confers resistance to phage T7; prevents culture collapse upon infection. Catalyzes the conversion of guanosine triphosphate (GTP) to 3'-deoxy-3',4'-didehydro-GTP (ddhGTP), probably via a SAM-dependent radical mechanism. The modified nucleotide represses transcription from T7 RNA polymerase-directed genes (possibly by acting as chain terminators), strongly suggesting these nucleotides block viral polymerase transcription. This chain is S-adenosylmethionine-dependent nucleotide dehydratase, found in Coraliomargarita akajimensis (strain DSM 45221 / IAM 15411 / JCM 23193 / KCTC 12865 / 04OKA010-24).